The chain runs to 137 residues: Putative pre-16S rRNA nuclease (137 aa).

It belongs to the YqgF nuclease family.

Its subcellular location is the cytoplasm. Its function is as follows. Could be a nuclease involved in processing of the 5'-end of pre-16S rRNA. In Flavobacterium psychrophilum (strain ATCC 49511 / DSM 21280 / CIP 103535 / JIP02/86), this protein is Putative pre-16S rRNA nuclease.